The primary structure comprises 564 residues: MRQSLTLIPTLREVPADAEAKSHQLLLRAGFIRQNTSGVYSYMPLAYKVIQNIQQIVREEMEKIDAVEMLMPALQQAETWQESGRWYTYGPELMRLKDRHGREFALGATHEEVITSLVRDEVKSYKRLPLTLYQIQSKFRDEKRPRFGLLRGREFIMKDAYSFHASAESLDETYQKMYEAYSNIFARCGINVRPVIADSGAMGGKDTHEFMALSAIGEDTIAYSDESQYAANIEMAEVLHQEVPSDEEPKALEKVHTPNVKTIEELTAFLQVSAEACIKSVLFKADDRFVLVLVRGDHEVNDIKVKNLLHAEVVELATHEEVIQQLGTEPGFVGPVGIHQDVEVYADQAVKAMVNAVAGANEGDHHYKNVNVNRDAQIKEFADLRFIKEGDPSPDGKGTIRFAEGIEVGQVFKLGTRYSEAMNATYLDENGRAQPMLMGCYGIGVSRTLSAIAEQHHDEKGLIWPKSVAPYDLHILALNMKNDGQRELAEKLYADLKAEGYEVLYDDRAERAGVKFADSDLIGLPIRITVGKRADEGIVEVKIRQTGESTEISVDELSAFISKQ.

The protein belongs to the class-II aminoacyl-tRNA synthetase family. ProS type 1 subfamily. Homodimer.

Its subcellular location is the cytoplasm. The enzyme catalyses tRNA(Pro) + L-proline + ATP = L-prolyl-tRNA(Pro) + AMP + diphosphate. Functionally, catalyzes the attachment of proline to tRNA(Pro) in a two-step reaction: proline is first activated by ATP to form Pro-AMP and then transferred to the acceptor end of tRNA(Pro). As ProRS can inadvertently accommodate and process non-cognate amino acids such as alanine and cysteine, to avoid such errors it has two additional distinct editing activities against alanine. One activity is designated as 'pretransfer' editing and involves the tRNA(Pro)-independent hydrolysis of activated Ala-AMP. The other activity is designated 'posttransfer' editing and involves deacylation of mischarged Ala-tRNA(Pro). The misacylated Cys-tRNA(Pro) is not edited by ProRS. This chain is Proline--tRNA ligase, found in Bacillus subtilis (strain 168).